Reading from the N-terminus, the 123-residue chain is Small ribosomal subunit protein uS13 (123 aa).

It belongs to the universal ribosomal protein uS13 family. In terms of assembly, part of the 30S ribosomal subunit. Forms a loose heterodimer with protein S19. Forms two bridges to the 50S subunit in the 70S ribosome.

In terms of biological role, located at the top of the head of the 30S subunit, it contacts several helices of the 16S rRNA. In the 70S ribosome it contacts the 23S rRNA (bridge B1a) and protein L5 of the 50S subunit (bridge B1b), connecting the 2 subunits; these bridges are implicated in subunit movement. Contacts the tRNAs in the A and P-sites. In Anaplasma marginale (strain St. Maries), this protein is Small ribosomal subunit protein uS13.